Consider the following 277-residue polypeptide: Large ribosomal subunit protein mL46 (277 aa).

N6-succinyllysine is present on lysine 217. Residue lysine 228 is modified to N6-acetyllysine. Position 246 is an N6-succinyllysine (lysine 246).

The protein belongs to the mitochondrion-specific ribosomal protein mL46 family. In terms of assembly, component of the mitochondrial ribosome large subunit (39S) which comprises a 16S rRNA and about 50 distinct proteins.

Its subcellular location is the mitochondrion. This Rattus norvegicus (Rat) protein is Large ribosomal subunit protein mL46 (Mrpl46).